A 199-amino-acid chain; its full sequence is Recombination protein RecR (199 aa).

A C4-type zinc finger spans residues 57-72 (CTVCGHITDIDPCAIC). One can recognise a Toprim domain in the interval 80–176 (TVVCVVQDSR…RVTRLAHGLP (97 aa)).

The protein belongs to the RecR family.

Functionally, may play a role in DNA repair. It seems to be involved in an RecBC-independent recombinational process of DNA repair. It may act with RecF and RecO. The protein is Recombination protein RecR of Exiguobacterium sp. (strain ATCC BAA-1283 / AT1b).